A 356-amino-acid polypeptide reads, in one-letter code: Photosystem II protein D1 4 (356 aa).

A run of 3 helical transmembrane segments spans residues 32 to 49, 121 to 136, and 145 to 159; these read YIGW…AATT, HFLI…FWEL, and WIAV…AATS. His-121 contacts chlorophyll a. The [CaMn4O5] cluster site is built by Asp-173 and Asp-192. The chain crosses the membrane as a helical span at residues 200-221; sequence FHMLGVAGVFGGALLSSLHGSL. His-201 lines the chlorophyll a pocket. A quinone is bound at residue His-218. The Fe cation site is built by His-218 and His-276. Residues 278-292 form a helical membrane-spanning segment; the sequence is LLAALPTIGIWFAAM. Residue His-336 participates in [CaMn4O5] cluster binding.

This sequence belongs to the reaction center PufL/M/PsbA/D family. In terms of assembly, PSII is composed of 1 copy each of membrane proteins PsbA, PsbB, PsbC, PsbD, PsbE, PsbF, PsbH, PsbI, PsbJ, PsbK, PsbL, PsbM, PsbT, PsbX, PsbY, PsbZ, Psb30/Ycf12, peripheral proteins PsbO, CyanoQ (PsbQ), PsbU, PsbV and a large number of cofactors. It forms dimeric complexes. It depends on The D1/D2 heterodimer binds P680, chlorophylls that are the primary electron donor of PSII, and subsequent electron acceptors. It shares a non-heme iron and each subunit binds pheophytin, quinone, additional chlorophylls, carotenoids and lipids. D1 provides most of the ligands for the Mn4-Ca-O5 cluster of the oxygen-evolving complex (OEC). There is also a Cl(-1) ion associated with D1 and D2, which is required for oxygen evolution. The PSII complex binds additional chlorophylls, carotenoids and specific lipids. as a cofactor. Post-translationally, tyr-164 forms a radical intermediate that is referred to as redox-active TyrZ, YZ or Y-Z.

The protein resides in the cellular thylakoid membrane. The enzyme catalyses 2 a plastoquinone + 4 hnu + 2 H2O = 2 a plastoquinol + O2. Functionally, photosystem II (PSII) is a light-driven water:plastoquinone oxidoreductase that uses light energy to abstract electrons from H(2)O, generating O(2) and a proton gradient subsequently used for ATP formation. It consists of a core antenna complex that captures photons, and an electron transfer chain that converts photonic excitation into a charge separation. The D1/D2 (PsbA/PsbD) reaction center heterodimer binds P680, the primary electron donor of PSII as well as several subsequent electron acceptors. In Trichormus variabilis (strain ATCC 29413 / PCC 7937) (Anabaena variabilis), this protein is Photosystem II protein D1 4.